The sequence spans 231 residues: Large ribosomal subunit protein uL1 (231 aa).

The protein belongs to the universal ribosomal protein uL1 family. In terms of assembly, part of the 50S ribosomal subunit.

In terms of biological role, binds directly to 23S rRNA. The L1 stalk is quite mobile in the ribosome, and is involved in E site tRNA release. Its function is as follows. Protein L1 is also a translational repressor protein, it controls the translation of the L11 operon by binding to its mRNA. The sequence is that of Large ribosomal subunit protein uL1 from Desulforudis audaxviator (strain MP104C).